The following is a 248-amino-acid chain: Transcriptional activator protein FnrL (248 aa).

The HTH crp-type domain occupies 154–232; the sequence is KTAREKIASL…KRHVIVTDFA (79 aa). Positions 191–210 form a DNA-binding region, H-T-H motif; that stretch reads REEMADYLGLTLETVSRQVS.

Its function is as follows. Anaerobic regulatory protein; transcriptional activator of hemA. Appears to regulate other genes. The polypeptide is Transcriptional activator protein FnrL (fnrL) (Cereibacter sphaeroides (strain ATCC 17023 / DSM 158 / JCM 6121 / CCUG 31486 / LMG 2827 / NBRC 12203 / NCIMB 8253 / ATH 2.4.1.) (Rhodobacter sphaeroides)).